The sequence spans 298 residues: Transcription factor bHLH114 (298 aa).

Residues 117 to 149 (LDHEIRNHKSSKEQITQDYKNLTSKRSEELEEN) are a coiled coil. The interval 126-154 (SSKEQITQDYKNLTSKRSEELEENSDEYS) is disordered. Residues 129-140 (EQITQDYKNLTS) are compositionally biased toward polar residues. The bHLH domain occupies 163–212 (LETLSPLPSFKVRKEKLGDRITALQQLVSPFGKTDTASVLNEAVEYIKFL).

As to quaternary structure, homodimer. In terms of tissue distribution, differentiating root endodermis.

It is found in the nucleus. This Arabidopsis thaliana (Mouse-ear cress) protein is Transcription factor bHLH114 (BHLH114).